The sequence spans 583 residues: L-galactono-1,4-lactone dehydrogenase 1, mitochondrial (583 aa).

The N-terminal 36 residues, Met-1–Pro-36, are a transit peptide targeting the mitochondrion. A propeptide spans Ala-37 to Lys-78 (removed in mature form). A helical transmembrane segment spans residues Tyr-45–Tyr-61. The FAD-binding PCMH-type domain maps to Thr-95 to Arg-266.

Requires FAD as cofactor.

It is found in the mitochondrion membrane. It catalyses the reaction L-galactono-1,4-lactone + 4 Fe(III)-[cytochrome c] = L-dehydroascorbate + 4 Fe(II)-[cytochrome c] + 5 H(+). It participates in cofactor biosynthesis; L-ascorbate biosynthesis. Its function is as follows. Involved in the biosynthesis of ascorbic acid. This Oryza sativa subsp. japonica (Rice) protein is L-galactono-1,4-lactone dehydrogenase 1, mitochondrial (GLDH1).